Here is a 966-residue protein sequence, read N- to C-terminus: Catenin alpha-2 (966 aa).

Positions 924-940 (PEKKPLVKREKPEEYQT) are enriched in basic and acidic residues. Positions 924-952 (PEKKPLVKREKPEEYQTRVRRGSQKKHIS) are disordered. Residues 941–951 (RVRRGSQKKHI) are compositionally biased toward basic residues.

Belongs to the vinculin/alpha-catenin family.

It localises to the cell membrane. The protein resides in the cytoplasm. Its subcellular location is the cytoskeleton. It is found in the cell junction. The protein localises to the adherens junction. It localises to the cell projection. The protein resides in the axon. Its subcellular location is the nucleus. May function as a linker between cadherin adhesion receptors and the cytoskeleton to regulate cell-cell adhesion and differentiation in the nervous system. This chain is Catenin alpha-2 (ctnna2), found in Xenopus tropicalis (Western clawed frog).